We begin with the raw amino-acid sequence, 354 residues long: MDYRSAGVDIDLGQAFVRGIRERVERIQVPSSGSSETLGGIGGFAGLFELPTGYQAPVLVAGTDGVGTKLDIAQQWGQHQGVGVDLVAMCANDVLTVGARPLFFLDYVATGKLEPEALWQVIDGILAGCQEAGCQLLGGETAEMPGFYPPGKYDLAGFCIGIVEKTAILDGSRVQLGDRLLALPSSGLHSNGYSLVRRIVADRGWRWDHRPPGWDRPLAEVFLTPTRIYVQAVQRLQAAGIAIHGMAHITGGGIPENLPRCLAPNQAARLQPHSWPIPQEFLWLQEQGQVETLEMFRTFNLGVGYVLVIPPEAENQVRSLLPEAFPIGEVVAACPGESRVLGLEQWGSLTSPAD.

This sequence belongs to the AIR synthase family.

It localises to the cytoplasm. The catalysed reaction is 2-formamido-N(1)-(5-O-phospho-beta-D-ribosyl)acetamidine + ATP = 5-amino-1-(5-phospho-beta-D-ribosyl)imidazole + ADP + phosphate + H(+). It functions in the pathway purine metabolism; IMP biosynthesis via de novo pathway; 5-amino-1-(5-phospho-D-ribosyl)imidazole from N(2)-formyl-N(1)-(5-phospho-D-ribosyl)glycinamide: step 2/2. This chain is Phosphoribosylformylglycinamidine cyclo-ligase, found in Synechococcus sp. (strain JA-2-3B'a(2-13)) (Cyanobacteria bacterium Yellowstone B-Prime).